Consider the following 539-residue polypeptide: Phosphoenolpyruvate carboxykinase (ATP) (539 aa).

3 residues coordinate substrate: Arg-64, Tyr-206, and Lys-212. ATP contacts are provided by residues Lys-212, His-231, and 247–255 (GLSGTGKTT). The Mn(2+) site is built by Lys-212 and His-231. Asp-268 is a binding site for Mn(2+). ATP contacts are provided by residues Glu-296, Arg-332, 448-449 (RI), and Thr-454. Arg-332 provides a ligand contact to substrate.

The protein belongs to the phosphoenolpyruvate carboxykinase (ATP) family. As to quaternary structure, monomer. Mn(2+) serves as cofactor.

It is found in the cytoplasm. It carries out the reaction oxaloacetate + ATP = phosphoenolpyruvate + ADP + CO2. Its pathway is carbohydrate biosynthesis; gluconeogenesis. Functionally, involved in the gluconeogenesis. Catalyzes the conversion of oxaloacetate (OAA) to phosphoenolpyruvate (PEP) through direct phosphoryl transfer between the nucleoside triphosphate and OAA. The chain is Phosphoenolpyruvate carboxykinase (ATP) from Edwardsiella ictaluri (strain 93-146).